Reading from the N-terminus, the 597-residue chain is MQLDIDRLVAYFGGVNALAEALKRHDPENAATTAAIYKWRTRGSLPLAQLQKLTALAESQGRPLDLNAFLQKNESLERTEMTQANRVIIFDTTLRDGEQSPGAAMTKEEKIRVARQLEKLGADIIEAGFAAASPGDFEAVNAIAKTITKSTVCSLSRAIERDIRQAGKAVAPAPKKRIHTFIATSPIHMEYKLKMKPKQVIEAAVKAVKIAREYTDDVEFSCEDALRSQIDFLAEICGAVIEAGATTINIPDTVGYSIPYKTEEFFRELIAKTPNGGKVVWSAHCHNDLGLAVANSLAALKGGARQVECTVNGLGERAGNASVEEIVMALKVRHDLFGLETGIDTTQIVPSSKLVSTITGYPVQPNKAIVGANAFSHESGIHQDGVLKHRETYEIMSAESVGWSANRLSLGKLSGRNAFKTKLADLGIELESEEALNAAFARFKELADKKREIFDEDLHALVSDEMGNMNAESYKFISQKISTETGEEPRADIVFGIKGEEKRASATGSGPVDAIFKAIESVAQSGATLQIYSVNAVTQGTESQGETSVRLARGNRVVNGQGADTDILAATAKAYLSALSKLEFSAAKPKAQGSGTI.

Positions 1-80 (MQLDIDRLVA…QKNESLERTE (80 aa)) are unknown. The Pyruvate carboxyltransferase domain maps to 87–349 (VIIFDTTLRD…ETGIDTTQIV (263 aa)). Residues 87 to 349 (VIIFDTTLRD…ETGIDTTQIV (263 aa)) are 2-isopropylmalate synthase. Mn(2+) contacts are provided by Asp-96, His-284, His-286, and Asn-320. The segment at 475–597 (KFISQKISTE…KPKAQGSGTI (123 aa)) is regulatory domain.

Belongs to the alpha-IPM synthase/homocitrate synthase family. LeuA type 1 subfamily. Homodimer. Requires Mn(2+) as cofactor.

Its subcellular location is the cytoplasm. It catalyses the reaction 3-methyl-2-oxobutanoate + acetyl-CoA + H2O = (2S)-2-isopropylmalate + CoA + H(+). It participates in amino-acid biosynthesis; L-leucine biosynthesis; L-leucine from 3-methyl-2-oxobutanoate: step 1/4. Its function is as follows. Catalyzes the condensation of the acetyl group of acetyl-CoA with 3-methyl-2-oxobutanoate (2-ketoisovalerate) to form 3-carboxy-3-hydroxy-4-methylpentanoate (2-isopropylmalate). In Neisseria gonorrhoeae (strain ATCC 700825 / FA 1090), this protein is 2-isopropylmalate synthase.